Here is a 294-residue protein sequence, read N- to C-terminus: Lipoyl synthase (294 aa).

Residues Cys-35, Cys-40, Cys-46, Cys-61, Cys-65, Cys-68, and Ser-275 each coordinate [4Fe-4S] cluster. A Radical SAM core domain is found at 46–264 (CWGGGTATVM…REAGLGLGFR (219 aa)).

The protein belongs to the radical SAM superfamily. Lipoyl synthase family. It depends on [4Fe-4S] cluster as a cofactor.

It is found in the cytoplasm. It catalyses the reaction [[Fe-S] cluster scaffold protein carrying a second [4Fe-4S](2+) cluster] + N(6)-octanoyl-L-lysyl-[protein] + 2 oxidized [2Fe-2S]-[ferredoxin] + 2 S-adenosyl-L-methionine + 4 H(+) = [[Fe-S] cluster scaffold protein] + N(6)-[(R)-dihydrolipoyl]-L-lysyl-[protein] + 4 Fe(3+) + 2 hydrogen sulfide + 2 5'-deoxyadenosine + 2 L-methionine + 2 reduced [2Fe-2S]-[ferredoxin]. It functions in the pathway protein modification; protein lipoylation via endogenous pathway; protein N(6)-(lipoyl)lysine from octanoyl-[acyl-carrier-protein]: step 2/2. Functionally, catalyzes the radical-mediated insertion of two sulfur atoms into the C-6 and C-8 positions of the octanoyl moiety bound to the lipoyl domains of lipoate-dependent enzymes, thereby converting the octanoylated domains into lipoylated derivatives. The chain is Lipoyl synthase from Anaeromyxobacter sp. (strain Fw109-5).